Reading from the N-terminus, the 206-residue chain is Large ribosomal subunit protein uL4 (206 aa).

This sequence belongs to the universal ribosomal protein uL4 family. As to quaternary structure, part of the 50S ribosomal subunit.

Functionally, one of the primary rRNA binding proteins, this protein initially binds near the 5'-end of the 23S rRNA. It is important during the early stages of 50S assembly. It makes multiple contacts with different domains of the 23S rRNA in the assembled 50S subunit and ribosome. In terms of biological role, forms part of the polypeptide exit tunnel. This chain is Large ribosomal subunit protein uL4, found in Bradyrhizobium sp. (strain ORS 278).